We begin with the raw amino-acid sequence, 239 residues long: Regulator of G-protein signaling 20 (239 aa).

Residues 1–29 are disordered; sequence MRTANGGPRARASPSASPADPGLPEGSER. The segment covering 8 to 19 has biased composition (low complexity); it reads PRARASPSASPA. The 117-residue stretch at 113 to 229 folds into the RGS domain; the sequence is SFDNLMVTPA…MNSTVYKDLL (117 aa).

In terms of assembly, forms a complex with G(alpha)z/i2 subunits and mu-opioid receptors; the formation of this complex results in mu-opioid receptor desensitization. Interacts with OPRM1. Post-translationally, fatty acylated. Heavily palmitoylated in the cysteine string motif. In terms of processing, N- and O-glycosylated in synapsomal membranes. Serine phosphorylated in synapsomal membranes. Post-translationally, sumoylated with SUMO1, SUMO2 and SUMO3. Sumoylation increases binding to the G-proteins, G(alpha)-i2 and G(z), and interaction with mu-opioid receptors.

It is found in the membrane. It localises to the nucleus. The protein resides in the cytoplasm. In terms of biological role, inhibits signal transduction by increasing the GTPase activity of G protein alpha subunits thereby driving them into their inactive GDP-bound form. Binds selectively to G(z)-alpha and G(alpha)-i2 subunits, accelerates their GTPase activity and regulates their signaling activities. The G(z)-alpha activity is inhibited by the phosphorylation and palmitoylation of the G-protein. Negatively regulates mu-opioid receptor-mediated activation of the G-proteins. The sequence is that of Regulator of G-protein signaling 20 (Rgs20) from Mus musculus (Mouse).